Here is a 295-residue protein sequence, read N- to C-terminus: Nucleotide-binding protein BPUM_3115 (295 aa).

16–23 (GMSGAGKT) contributes to the ATP binding site. Residue 67–70 (DLRG) coordinates GTP.

The protein belongs to the RapZ-like family.

Functionally, displays ATPase and GTPase activities. The chain is Nucleotide-binding protein BPUM_3115 from Bacillus pumilus (strain SAFR-032).